A 180-amino-acid polypeptide reads, in one-letter code: ATP-dependent protease subunit HslV (180 aa).

T7 is an active-site residue. Residues A164, C167, and T170 each coordinate Na(+).

It belongs to the peptidase T1B family. HslV subfamily. In terms of assembly, a double ring-shaped homohexamer of HslV is capped on each side by a ring-shaped HslU homohexamer. The assembly of the HslU/HslV complex is dependent on binding of ATP.

The protein resides in the cytoplasm. It carries out the reaction ATP-dependent cleavage of peptide bonds with broad specificity.. Allosterically activated by HslU binding. Protease subunit of a proteasome-like degradation complex believed to be a general protein degrading machinery. The chain is ATP-dependent protease subunit HslV from Brevibacillus brevis (strain 47 / JCM 6285 / NBRC 100599).